We begin with the raw amino-acid sequence, 397 residues long: MNENIAEKFRADGVARPNWSAVFAVAFCVACLITVEFLPVSLLTPMAQDLGISEGVAGQSVTVTAFVAMFSSLFITQIIQATDRRYIVILFAVLLTASCLMVSFANSFTLLLLGRACLGLALGGFWAISASLTMRLVPARTVPKALSVIFGAVSIALVIAAPLGSFLGGIIGWRNVFNAAAVMGVLCVIWVVKSLPSLPGEPSHQKQNMFSLLQRPGVMAGMIAIFMSFAGQFAFFTYIRPVYMNLAGFDVDGLTLVLLSFGIASFVGTSFSSYVLKRSVKLALAGAPLLLALSALTLIVWGSDKTVAAAIAIIWGLAFALVPVGWSTWITRSLADQAEKAGSIQVAVIQLANTCGAAVGGYALDNFGLLSPLALSGGLMLLTALVVAAKVRITPMS.

Residues 1–21 are Cytoplasmic-facing; it reads MNENIAEKFRADGVARPNWSA. A helical transmembrane segment spans residues 22–42; the sequence is VFAVAFCVACLITVEFLPVSL. Residues 43 to 54 are Periplasmic-facing; the sequence is LTPMAQDLGISE. A helical membrane pass occupies residues 55–75; that stretch reads GVAGQSVTVTAFVAMFSSLFI. Topologically, residues 76–85 are cytoplasmic; sequence TQIIQATDRR. The helical transmembrane segment at 86-106 threads the bilayer; the sequence is YIVILFAVLLTASCLMVSFAN. A topological domain (periplasmic) is located at residue serine 107. The helical transmembrane segment at 108 to 128 threads the bilayer; sequence FTLLLLGRACLGLALGGFWAI. Residues 129–147 lie on the Cytoplasmic side of the membrane; the sequence is SASLTMRLVPARTVPKALS. The chain crosses the membrane as a helical span at residues 148 to 168; the sequence is VIFGAVSIALVIAAPLGSFLG. The Periplasmic segment spans residues 169–175; it reads GIIGWRN. Residues 176-196 traverse the membrane as a helical segment; it reads VFNAAAVMGVLCVIWVVKSLP. Topologically, residues 197-215 are cytoplasmic; that stretch reads SLPGEPSHQKQNMFSLLQR. The helical transmembrane segment at 216–236 threads the bilayer; the sequence is PGVMAGMIAIFMSFAGQFAFF. Topologically, residues 237–255 are periplasmic; it reads TYIRPVYMNLAGFDVDGLT. Residues 256 to 276 form a helical membrane-spanning segment; it reads LVLLSFGIASFVGTSFSSYVL. Over 277–281 the chain is Cytoplasmic; that stretch reads KRSVK. The chain crosses the membrane as a helical span at residues 282–302; that stretch reads LALAGAPLLLALSALTLIVWG. The Periplasmic portion of the chain corresponds to 303–305; the sequence is SDK. Residues 306–326 form a helical membrane-spanning segment; the sequence is TVAAAIAIIWGLAFALVPVGW. At 327 to 343 the chain is on the cytoplasmic side; it reads STWITRSLADQAEKAGS. A helical membrane pass occupies residues 344 to 364; sequence IQVAVIQLANTCGAAVGGYAL. At 365–366 the chain is on the periplasmic side; it reads DN. A helical transmembrane segment spans residues 367–387; that stretch reads FGLLSPLALSGGLMLLTALVV. Residues 388–397 are Cytoplasmic-facing; that stretch reads AAKVRITPMS.

The protein belongs to the major facilitator superfamily. DHA1 family. NepI (TC 2.A.1.2.26) subfamily.

The protein localises to the cell inner membrane. It carries out the reaction inosine(in) + H(+)(out) = inosine(out) + H(+)(in). The catalysed reaction is guanosine(in) + H(+)(out) = guanosine(out) + H(+)(in). Its function is as follows. Involved in the efflux of purine ribonucleosides, such as inosine and guanosine. The chain is Purine ribonucleoside efflux pump NepI from Salmonella paratyphi A (strain ATCC 9150 / SARB42).